We begin with the raw amino-acid sequence, 112 residues long: Integration host factor subunit alpha (112 aa).

The protein belongs to the bacterial histone-like protein family. In terms of assembly, heterodimer of an alpha and a beta chain.

In terms of biological role, this protein is one of the two subunits of integration host factor, a specific DNA-binding protein that functions in genetic recombination as well as in transcriptional and translational control. The chain is Integration host factor subunit alpha from Sinorhizobium medicae (strain WSM419) (Ensifer medicae).